A 197-amino-acid polypeptide reads, in one-letter code: Imidazoleglycerol-phosphate dehydratase (197 aa).

The protein belongs to the imidazoleglycerol-phosphate dehydratase family.

Its subcellular location is the cytoplasm. The enzyme catalyses D-erythro-1-(imidazol-4-yl)glycerol 3-phosphate = 3-(imidazol-4-yl)-2-oxopropyl phosphate + H2O. It participates in amino-acid biosynthesis; L-histidine biosynthesis; L-histidine from 5-phospho-alpha-D-ribose 1-diphosphate: step 6/9. This is Imidazoleglycerol-phosphate dehydratase from Azotobacter vinelandii (strain DJ / ATCC BAA-1303).